Consider the following 86-residue polypeptide: Small ribosomal subunit protein bS20 (86 aa).

The segment covering 1–27 (MANIKSAKKRAVQSEKRRQHNASRRSM) has biased composition (basic residues). The tract at residues 1-28 (MANIKSAKKRAVQSEKRRQHNASRRSMM) is disordered.

Belongs to the bacterial ribosomal protein bS20 family.

Its function is as follows. Binds directly to 16S ribosomal RNA. This is Small ribosomal subunit protein bS20 from Proteus mirabilis (strain HI4320).